The chain runs to 352 residues: Uroporphyrinogen decarboxylase (352 aa).

Substrate contacts are provided by residues 26–30, Asp76, Tyr153, Ser208, and His323; that span reads RQAGR.

Belongs to the uroporphyrinogen decarboxylase family. Homodimer.

Its subcellular location is the cytoplasm. It carries out the reaction uroporphyrinogen III + 4 H(+) = coproporphyrinogen III + 4 CO2. Its pathway is porphyrin-containing compound metabolism; protoporphyrin-IX biosynthesis; coproporphyrinogen-III from 5-aminolevulinate: step 4/4. In terms of biological role, catalyzes the decarboxylation of four acetate groups of uroporphyrinogen-III to yield coproporphyrinogen-III. The protein is Uroporphyrinogen decarboxylase of Prochlorococcus marinus (strain MIT 9303).